The sequence spans 155 residues: MSRRGTAEKKTAKSDPIYRNRLVNMLVNRILKHGKKSLAYQIIYRAVKKIQQKTETNPLSVLRQAIRGVTPDIAVKARRVGGSTHQVPIEIGSTQGKALAIRWLLGASRKRPGRNMAFKLSSELVDAAKGSGDAIRKKEETHKMAEANRAFAHFR.

It belongs to the universal ribosomal protein uS7 family. In terms of assembly, part of the 30S ribosomal subunit.

Its subcellular location is the plastid. It is found in the chloroplast. Functionally, one of the primary rRNA binding proteins, it binds directly to 16S rRNA where it nucleates assembly of the head domain of the 30S subunit. This Spathiphyllum wallisii (Peace lily) protein is Small ribosomal subunit protein uS7c (rps7).